We begin with the raw amino-acid sequence, 95 residues long: MNIRPLGDRVVIKRVEAEETTKSGIVLPGAAKEKPQVAEVIAVGPGGLVDGKEVKMELKVGDKVLFSKYAGNEVKIEGEEVTILKQDDILAVVEG.

Belongs to the GroES chaperonin family. As to quaternary structure, heptamer of 7 subunits arranged in a ring. Interacts with the chaperonin GroEL.

The protein resides in the cytoplasm. Functionally, together with the chaperonin GroEL, plays an essential role in assisting protein folding. The GroEL-GroES system forms a nano-cage that allows encapsulation of the non-native substrate proteins and provides a physical environment optimized to promote and accelerate protein folding. GroES binds to the apical surface of the GroEL ring, thereby capping the opening of the GroEL channel. The protein is Co-chaperonin GroES of Clostridium botulinum (strain ATCC 19397 / Type A).